Consider the following 378-residue polypeptide: Metacaspase-1B (378 aa).

The segment at 1–70 (MCSPPPYPPQ…QEAQSFGGGA (70 aa)) is disordered. Residues 10-29 (QGHHYPPSPHGSYYSPTPYG) are compositionally biased toward low complexity. Residues His169 and Cys225 contribute to the active site.

The protein belongs to the peptidase C14B family.

In terms of biological role, involved in cell death (apoptosis). In Aspergillus terreus (strain NIH 2624 / FGSC A1156), this protein is Metacaspase-1B (casB).